We begin with the raw amino-acid sequence, 288 residues long: Elongation factor Ts (288 aa).

The interval 82–85 (TDFV) is involved in Mg(2+) ion dislocation from EF-Tu.

Belongs to the EF-Ts family.

It localises to the cytoplasm. Associates with the EF-Tu.GDP complex and induces the exchange of GDP to GTP. It remains bound to the aminoacyl-tRNA.EF-Tu.GTP complex up to the GTP hydrolysis stage on the ribosome. In Pelodictyon phaeoclathratiforme (strain DSM 5477 / BU-1), this protein is Elongation factor Ts.